The chain runs to 220 residues: Nitrile hydratase subunit beta (220 aa).

This sequence belongs to the nitrile hydratase subunit beta family. Heterodimer of an alpha and a beta chain.

It carries out the reaction an aliphatic primary amide = an aliphatic nitrile + H2O. Its function is as follows. NHase catalyzes the hydration of various nitrile compounds to the corresponding amides. The sequence is that of Nitrile hydratase subunit beta (nthB) from Pseudomonas chlororaphis (Pseudomonas aureofaciens).